Consider the following 84-residue polypeptide: U1-hexatoxin-Iw1a (84 aa).

A signal peptide spans 1-18 (MLKFVVVICLVIMAITFA). 5 disulfides stabilise this stretch: Cys-21/Cys-32, Cys-26/Cys-40, Cys-31/Cys-66, Cys-50/Cys-74, and Cys-68/Cys-81.

The protein belongs to the MIT-like AcTx family. Expressed by the venom gland.

The protein resides in the secreted. The protein is U1-hexatoxin-Iw1a of Illawarra wisharti (Illawarra funnel-web spider).